The chain runs to 197 residues: MEAFRTHTGIGVPLRRSNVDTDQIIPAVYLKRVTRTGFEDGLFAAWRNDPSFVLNLPPFDRGSVLVAGPDFGTGSSREHAVWALMDYGFRVVISSRFADIFRGNAGKAGLLAAEVNQNDVELLWKLIEQNPGLEITVNLQDRNIIAGTVMVPFTIDDYTAWRLLEGLDDIGLTLRKQSEIEDYERRRPSWKPRTLPV.

Belongs to the LeuD family. LeuD type 1 subfamily. As to quaternary structure, heterodimer of LeuC and LeuD.

The catalysed reaction is (2R,3S)-3-isopropylmalate = (2S)-2-isopropylmalate. It participates in amino-acid biosynthesis; L-leucine biosynthesis; L-leucine from 3-methyl-2-oxobutanoate: step 2/4. Catalyzes the isomerization between 2-isopropylmalate and 3-isopropylmalate, via the formation of 2-isopropylmaleate. This is 3-isopropylmalate dehydratase small subunit from Mycobacterium sp. (strain KMS).